The primary structure comprises 193 residues: Dirigent protein 11 (193 aa).

An N-terminal signal peptide occupies residues 1–33 (MLQITNMATPFLLLLLPLIFSTVLLLTITVTQS). 2 N-linked (GlcNAc...) asparagine glycosylation sites follow: N78 and N136.

Belongs to the plant dirigent protein family. Homodimer.

It localises to the secreted. It is found in the extracellular space. The protein localises to the apoplast. In terms of biological role, dirigent proteins impart stereoselectivity on the phenoxy radical-coupling reaction, yielding optically active lignans from two molecules of coniferyl alcohol in the biosynthesis of lignans, flavonolignans, and alkaloids and thus plays a central role in plant secondary metabolism. This Arabidopsis thaliana (Mouse-ear cress) protein is Dirigent protein 11 (DIR11).